The chain runs to 875 residues: Serrate RNA effector molecule homolog (875 aa).

Residues 1-90 are disordered; it reads MGDSDDEYDR…RRDWDEHSSD (90 aa). Glycine 2 carries the post-translational modification N-acetylglycine. Serine 4 carries the phosphoserine modification. Tyrosine 8 carries the post-translational modification Phosphotyrosine. Residues 8-73 are compositionally biased toward basic and acidic residues; sequence YDRRRRDKFR…ERFSPPRHEL (66 aa). Serine 67, serine 74, and serine 136 each carry phosphoserine. Lysine 150 is covalently cross-linked (Glycyl lysine isopeptide (Lys-Gly) (interchain with G-Cter in SUMO2)). Residues 272 to 411 form a disordered region; that stretch reads EEEEQAGKTG…KPKDAAGLEC (140 aa). Positions 297–345 are enriched in basic and acidic residues; it reads EGERKANDKDEKKEDGKQAENDSSNDDKTKKSEGDGDKEEKKEEAEKEA. Acidic residues predominate over residues 369–386; the sequence is SESESEGGQAEEEKEEAE. Positions 387–411 are enriched in basic and acidic residues; the sequence is EALKEKEKPKEEEKEKPKDAAGLEC. Residues serine 492 and serine 539 each carry the phosphoserine modification. At threonine 543 the chain carries Phosphothreonine. The residue at position 569 (serine 569) is a Phosphoserine. The segment at 571 to 597 is disordered; the sequence is EEEELLGSSGGPPPEEPPKEGNPAEIN. At threonine 670 the chain carries Phosphothreonine. Serine 678 is subject to Phosphoserine. Omega-N-methylarginine occurs at positions 832, 839, and 849. The disordered stretch occupies residues 834-853; that stretch reads NYDAFRGQGGYPGKPRNRMV.

The protein belongs to the ARS2 family. Interacts with CASP8AP2 and ERBB4. Interacts with NCBP1/CBP80 and DROSHA. Interacts with LUZP4. Interacts with NCBP2/CBP20 and NCBP3. Interacts with MTREX. In terms of tissue distribution, widely expressed, with a preference for proliferating cells. Highly expressed in hematopoietic tissues and reduced or absent expression in parenchymal organs like liver and kidney. In the brain, expressed in the subventricular zone by niche astrocytes, ependymal cells and neural stem cells. In this cerebral context, expressed in slowly dividing cells.

It localises to the nucleus. It is found in the nucleoplasm. The protein resides in the cytoplasm. In terms of biological role, acts as a mediator between the cap-binding complex (CBC) and the primary microRNAs (miRNAs) processing machinery during cell proliferation. Contributes to the stability and delivery of capped primary miRNA transcripts to the primary miRNA processing complex containing DGCR8 and DROSHA, thereby playing a role in RNA-mediated gene silencing (RNAi) by miRNAs. Binds capped RNAs (m7GpppG-capped RNA); however interaction is probably mediated via its interaction with NCBP1/CBP80 component of the CBC complex. Involved in cell cycle progression at S phase. Does not directly confer arsenite resistance but rather modulates arsenic sensitivity. Independently of its activity on miRNAs, necessary and sufficient to promote neural stem cell self-renewal. Does so by directly binding SOX2 promoter and positively regulating its transcription. The chain is Serrate RNA effector molecule homolog (Srrt) from Mus musculus (Mouse).